A 402-amino-acid chain; its full sequence is Speedy protein E2 (402 aa).

The interval 1-89 is disordered; sequence MDRTETRFRK…EEPEKELAPE (89 aa). Positions 16–39 are enriched in polar residues; that stretch reads GKITTSRQPHPQNEQSPQRSTSGY. Over residues 76 to 89 the composition is skewed to acidic residues; it reads DESEEEPEKELAPE.

Belongs to the Speedy/Ringo family.

The sequence is that of Speedy protein E2 (SPDYE2) from Homo sapiens (Human).